A 341-amino-acid polypeptide reads, in one-letter code: Anthranilate phosphoribosyltransferase (341 aa).

5-phospho-alpha-D-ribose 1-diphosphate contacts are provided by residues G84, G87–D88, T92, N94–T97, K112–S120, and S124. G84 lines the anthranilate pocket. Mg(2+) is bound at residue S96. Anthranilate is bound at residue N115. Anthranilate is bound at residue R170. Residues D229 and E230 each coordinate Mg(2+).

The protein belongs to the anthranilate phosphoribosyltransferase family. In terms of assembly, homodimer. The cofactor is Mg(2+).

It carries out the reaction N-(5-phospho-beta-D-ribosyl)anthranilate + diphosphate = 5-phospho-alpha-D-ribose 1-diphosphate + anthranilate. It participates in amino-acid biosynthesis; L-tryptophan biosynthesis; L-tryptophan from chorismate: step 2/5. Catalyzes the transfer of the phosphoribosyl group of 5-phosphorylribose-1-pyrophosphate (PRPP) to anthranilate to yield N-(5'-phosphoribosyl)-anthranilate (PRA). The protein is Anthranilate phosphoribosyltransferase of Polynucleobacter asymbioticus (strain DSM 18221 / CIP 109841 / QLW-P1DMWA-1) (Polynucleobacter necessarius subsp. asymbioticus).